Consider the following 217-residue polypeptide: MAMFLKSRGVRSCRDRRLLSDEEEETSQSSSYTLGSQASQSIQEEDVSDTDESDYSDEDEEIDLEEEYPSDEDPSEGSDSDPSWHPSDSDESDYSESDEDEATPGSQASRSSRVSPSTQQSSGLTPTPSFSRPRTRAPPRPPAPAPVRGRASAPPRPPAPVQQSTKDKGPHRPTRPVLRGPAPRRPPPPSSPNTYNKHMMETTPPIKGNNNYNWPWL.

The interval 1 to 217 (MAMFLKSRGV…GNNNYNWPWL (217 aa)) is disordered. Residues 32–42 (YTLGSQASQSI) show a composition bias toward polar residues. Acidic residues predominate over residues 43–79 (QEEDVSDTDESDYSDEDEEIDLEEEYPSDEDPSEGSD). The tract at residues 63-64 (DL) is interaction with host histones H3/H4. The interval 81–84 (DPSW) is interaction with host H2A/H2B. Acidic residues predominate over residues 89–102 (SDESDYSESDEDEA). The span at 106–132 (SQASRSSRVSPSTQQSSGLTPTPSFSR) shows a compositional bias: low complexity. A compositionally biased stretch (pro residues) spans 136-145 (RAPPRPPAPA). A compositionally biased stretch (polar residues) spans 208–217 (GNNNYNWPWL).

This sequence belongs to the lymphocryptovirus BKRF4 family. As to quaternary structure, forms a complex with the host H3/H4 dimer and histone chaperone ASF1. Also forms a complex with host H2A/H2B dimer. Interacts (via C-terminus) with BGLF2; this interaction is important for infectious virion production.

It localises to the virion tegument. The protein resides in the host nucleus. The protein localises to the host cytoplasm. Its subcellular location is the host perinuclear region. Its function is as follows. Histone-binding protein that binds to histones H2A/H2B, H3/H4 and cellular chromatin to overcome the host DNA damage response triggered by the viral genome ends. Interferes with histone ubiquitination and recruitment of repair proteins. The chain is Tegument protein BKRF4 from Epstein-Barr virus (strain AG876) (HHV-4).